The primary structure comprises 734 residues: PI-PLC X-box domain-containing protein DDB_G0293730 (734 aa).

Positions 8–70 (IKNILLKIEK…ELNEKLIVEK (63 aa)) form a coiled coil. A PI-PLC X-box domain is found at 440 to 604 (KLKDRKVRNL…CIYDDLVNPL (165 aa)).

In Dictyostelium discoideum (Social amoeba), this protein is PI-PLC X-box domain-containing protein DDB_G0293730.